The following is a 121-amino-acid chain: Ribonuclease P protein component (121 aa).

Belongs to the RnpA family. In terms of assembly, consists of a catalytic RNA component (M1 or rnpB) and a protein subunit.

The catalysed reaction is Endonucleolytic cleavage of RNA, removing 5'-extranucleotides from tRNA precursor.. In terms of biological role, RNaseP catalyzes the removal of the 5'-leader sequence from pre-tRNA to produce the mature 5'-terminus. It can also cleave other RNA substrates such as 4.5S RNA. The protein component plays an auxiliary but essential role in vivo by binding to the 5'-leader sequence and broadening the substrate specificity of the ribozyme. In Coxiella burnetii (strain Dugway 5J108-111), this protein is Ribonuclease P protein component.